Here is a 122-residue protein sequence, read N- to C-terminus: Defensin-like protein 181 (122 aa).

The signal sequence occupies residues 1–26; the sequence is MERIPSLASLVSLLIIFATVVNQTRA. 8 disulfide bridges follow: Cys-29–Cys-70, Cys-36–Cys-55, Cys-39–Cys-64, Cys-43–Cys-66, Cys-76–Cys-122, Cys-87–Cys-107, Cys-92–Cys-116, and Cys-96–Cys-118.

Belongs to the DEFL family.

Its subcellular location is the secreted. Confers broad-spectrum resistance to pathogens. This chain is Defensin-like protein 181 (PDF3.1), found in Arabidopsis thaliana (Mouse-ear cress).